The primary structure comprises 875 residues: cGMP-specific 3',5'-cyclic phosphodiesterase (875 aa).

Disordered stretches follow at residues 1 to 29 (MERAGPSFGQQRQQQQPQQQKQQQRDQDS) and 78 to 102 (SCSCPLQQSPRADNSAPGTPTRKIS). The span at 10–22 (QQRQQQQPQQQKQ) shows a compositional bias: low complexity. A compositionally biased stretch (polar residues) spans 78 to 101 (SCSCPLQQSPRADNSAPGTPTRKI). Residue Ser-102 is modified to Phosphoserine. 2 consecutive GAF domains span residues 164–314 (DVTA…GIVL) and 346–503 (SLEV…GLGI). One can recognise a PDEase domain in the interval 536 to 860 (ETRELQSLAA…QKWQALAEQQ (325 aa)). His-613 serves as the catalytic Proton donor. The Zn(2+) site is built by His-617, His-653, Asp-654, and Asp-764. Asp-654 contacts Mg(2+). Gln-817 contacts 3',5'-cyclic GMP.

It belongs to the cyclic nucleotide phosphodiesterase family. It depends on Zn(2+) as a cofactor. The cofactor is Mg(2+). In terms of processing, phosphorylation is regulated by binding of cGMP to the two allosteric sites. Phosphorylation by PRKG1 leads to its activation. As to expression, expressed in aortic smooth muscle cells, heart, placenta, skeletal muscle and pancreas and, to a much lesser extent, in brain, liver and lung.

The enzyme catalyses 3',5'-cyclic GMP + H2O = GMP + H(+). It participates in purine metabolism; 3',5'-cyclic GMP degradation; GMP from 3',5'-cyclic GMP: step 1/1. With respect to regulation, sildenafil (Viagra) is a highly selective and potent inhibitor of PDE5A and is effective in the treatment of penile erectile dysfunction. Also inhibited by zaprinast. Functionally, plays a role in signal transduction by regulating the intracellular concentration of cyclic nucleotides. This phosphodiesterase catalyzes the specific hydrolysis of cGMP to 5'-GMP. Specifically regulates nitric-oxide-generated cGMP. The sequence is that of cGMP-specific 3',5'-cyclic phosphodiesterase from Homo sapiens (Human).